Consider the following 572-residue polypeptide: uncharacterized protein (572 aa).

Positions 13 to 45 (ALIAKPKGKTVSGDGADPKKRGRPKKNATEPAV) are disordered. Residues 177-204 (VLTKEMEEKLEALDRDMRTAEETKVSIA) are a coiled coil.

This is an uncharacterized protein from Dryophytes versicolor (chameleon treefrog).